A 486-amino-acid polypeptide reads, in one-letter code: Betaine aldehyde dehydrogenase (486 aa).

Positions 23 and 90 each coordinate K(+). 147–149 serves as a coordination point for NAD(+); it reads GAW. Lys-159 functions as the Charge relay system in the catalytic mechanism. NAD(+) contacts are provided by residues 173–176 and 226–229; these read KPSE and ESGT. Residue Leu-241 coordinates K(+). Glu-247 functions as the Proton acceptor in the catalytic mechanism. NAD(+) contacts are provided by Gly-249, Cys-281, and Glu-382. Residue Cys-281 is the Nucleophile of the active site. Cys-281 is subject to Cysteine sulfenic acid (-SOH). Residues Lys-452 and Gly-455 each coordinate K(+). Catalysis depends on Glu-459, which acts as the Charge relay system.

Belongs to the aldehyde dehydrogenase family. In terms of assembly, dimer of dimers. Requires K(+) as cofactor.

It catalyses the reaction betaine aldehyde + NAD(+) + H2O = glycine betaine + NADH + 2 H(+). It participates in amine and polyamine biosynthesis; betaine biosynthesis via choline pathway; betaine from betaine aldehyde: step 1/1. Involved in the biosynthesis of the osmoprotectant glycine betaine. Catalyzes the irreversible oxidation of betaine aldehyde to the corresponding acid. The sequence is that of Betaine aldehyde dehydrogenase from Vibrio vulnificus (strain YJ016).